A 104-amino-acid polypeptide reads, in one-letter code: uncharacterized protein (104 aa).

The tract at residues methionine 1–glutamate 24 is disordered.

This is an uncharacterized protein from Saccharomyces cerevisiae (strain ATCC 204508 / S288c) (Baker's yeast).